The sequence spans 476 residues: Proline--tRNA ligase (476 aa).

The protein belongs to the class-II aminoacyl-tRNA synthetase family. ProS type 3 subfamily. As to quaternary structure, homodimer.

It is found in the cytoplasm. The catalysed reaction is tRNA(Pro) + L-proline + ATP = L-prolyl-tRNA(Pro) + AMP + diphosphate. In terms of biological role, catalyzes the attachment of proline to tRNA(Pro) in a two-step reaction: proline is first activated by ATP to form Pro-AMP and then transferred to the acceptor end of tRNA(Pro). In Cenarchaeum symbiosum (strain A), this protein is Proline--tRNA ligase.